We begin with the raw amino-acid sequence, 185 residues long: Ribosome-recycling factor (185 aa).

It belongs to the RRF family.

Its subcellular location is the cytoplasm. Its function is as follows. Responsible for the release of ribosomes from messenger RNA at the termination of protein biosynthesis. May increase the efficiency of translation by recycling ribosomes from one round of translation to another. This is Ribosome-recycling factor from Salinispora arenicola (strain CNS-205).